Consider the following 50-residue polypeptide: Insulin-1 (50 aa).

Intrachain disulfides connect cysteine 7-cysteine 36, cysteine 19-cysteine 49, and cysteine 35-cysteine 40.

It belongs to the insulin family. Heterodimer of a B chain and an A chain linked by two disulfide bonds.

It is found in the secreted. Functionally, insulin decreases blood glucose concentration. It increases cell permeability to monosaccharides, amino acids and fatty acids. It accelerates glycolysis, the pentose phosphate cycle, and glycogen synthesis in liver. This is Insulin-1 from Katsuwonus pelamis (Skipjack tuna).